A 490-amino-acid polypeptide reads, in one-letter code: Subtilisin-like protease 8 (490 aa).

The first 26 residues, 1 to 26 (MKGLLSLSVLPVLAYASPMIVDSIHQ), serve as a signal peptide directing secretion. The propeptide occupies 27-134 (DAAPILSSTN…YIERDSEVRA (108 aa)). In terms of domain architecture, Inhibitor I9 spans 43-133 (SYIVVFKKGV…EYIERDSEVR (91 aa)). Residues 144 to 450 (PWGLARISHR…GGSDNYKEIV (307 aa)) enclose the Peptidase S8 domain. Catalysis depends on charge relay system residues aspartate 180 and histidine 212. Asparagine 282 is a glycosylation site (N-linked (GlcNAc...) asparagine). Catalysis depends on serine 378, which acts as the Charge relay system. Asparagine 455 is a glycosylation site (N-linked (GlcNAc...) asparagine).

The protein belongs to the peptidase S8 family.

It localises to the secreted. Its function is as follows. Secreted subtilisin-like serine protease with keratinolytic activity that contributes to pathogenicity. The polypeptide is Subtilisin-like protease 8 (SUB8) (Arthroderma otae (strain ATCC MYA-4605 / CBS 113480) (Microsporum canis)).